The primary structure comprises 1480 residues: Heme-responsive zinc finger transcription factor HAP1 (1480 aa).

Over residues 1-50 (MSNTPYNSSVPSIASMTQSSVSRSPNMHTATTPGANTSSNSPPLHMSSDS) the composition is skewed to polar residues. Positions 1 to 56 (MSNTPYNSSVPSIASMTQSSVSRSPNMHTATTPGANTSSNSPPLHMSSDSSKIKRK) are disordered. Zn(2+)-binding residues include C64, C67, C74, C81, C84, and C93. A DNA-binding region (zn(2)-C6 fungal-type) is located at residues 64 to 93 (CTICRKRKVKCDKLRPHCQQCTKTGVAHLC). A coiled-coil region spans residues 105–134 (EKELLKDNELKKLRERVKSLEKTLSKVHSS). Positions 126 to 208 (KTLSKVHSSP…ANSSSLSISN (83 aa)) are disordered. Residues 130–142 (KVHSSPSSNSLKS) are compositionally biased toward low complexity. 2 stretches are compositionally biased toward polar residues: residues 143-152 (YNTPESSNLF) and 160-176 (TLVN…SHMH). A compositionally biased stretch (low complexity) spans 177-208 (QQQQQQQQQEQQQDFSRSANANANSSSLSISN). Positions 244 to 441 (KGDPYLKLLW…NTIPHHQPQS (198 aa)) are heme-responsive; required for HMC formation. HRM repeat units lie at residues 280–285 (KCPINH), 296–301 (KCPVDH), 320–325 (KCPVDH), 344–349 (RCPVDH), 386–391 (KCPVDH), and 412–417 (RCPIDH). Composition is skewed to polar residues over residues 429–444 (STHN…SGSH) and 703–731 (QLNA…NPTL). Disordered stretches follow at residues 429–456 (STHN…RKHD) and 703–764 (QLNA…KENQ). Low complexity predominate over residues 732–756 (NNNMSAATTNSSSRSGSADSRSGSN). One copy of the HRM 7 repeat lies at 1189 to 1194 (KCPVYQ). The disordered stretch occupies residues 1381–1408 (TANTDTSANGSALSTLTSPQGSDLASNS). The span at 1385-1408 (DTSANGSALSTLTSPQGSDLASNS) shows a compositional bias: polar residues.

Binds DNA as a homodimer. Interacts with SRO9 and YDJ1. In the absence of heme, binds to at least four cellular proteins, including YDJ1 and SRO9, forming a high-molecular-weight complex (HMC) which results in repression of its activity and dictates its DNA-binding specificity.

It localises to the nucleus. Functionally, regulation of oxygen dependent gene expression. It modulates the expression of Iso-1 (CYP1) and Iso-2 (CYP3) cytochrome c. In response to heme, promotes transcription of genes encoding functions required for respiration, controlling oxidative damage and repression of anaerobic genes. Binds to the sequence 5'-CGGNNNTNNCGG-3'. Is non-functional in terms of iso-1 cytochrome c expression in strain S288c and its derivatives. This Saccharomyces cerevisiae (strain Kyokai no. 7 / NBRC 101557) (Baker's yeast) protein is Heme-responsive zinc finger transcription factor HAP1 (HAP1).